The following is a 396-amino-acid chain: General transcription factor IIH subunit 2 (396 aa).

In terms of domain architecture, VWFA spans His-60–Val-236. Tyr-95 is subject to Phosphotyrosine. The C4-type zinc-finger motif lies at Cys-292–Cys-309.

The protein belongs to the GTF2H2 family. As to quaternary structure, component of the TFIID-containing RNA polymerase II pre-initiation complex that is composed of TBP and at least GTF2A1, GTF2A2, GTF2E1, GTF2E2, GTF2F1, GTF2H2, GTF2H3, GTF2H4, GTF2H5, GTF2B, TCEA1, ERCC2 and ERCC3. Component of the 7-subunit TFIIH core complex composed of XPB/ERCC3, XPD/ERCC2, GTF2H1, GTF2H2, GTF2H3, GTF2H4 and GTF2H5, which is active in NER. The core complex associates with the 3-subunit CDK-activating kinase (CAK) module composed of CCNH/cyclin H, CDK7 and MNAT1 to form the 10-subunit holoenzyme (holo-TFIIH) active in transcription. Interacts with XPB, XPD, GTF2H1 and GTF2H3.

The protein resides in the nucleus. Its function is as follows. Component of the general transcription and DNA repair factor IIH (TFIIH) core complex, which is involved in general and transcription-coupled nucleotide excision repair (NER) of damaged DNA and, when complexed to CAK, in RNA transcription by RNA polymerase II. In NER, TFIIH acts by opening DNA around the lesion to allow the excision of the damaged oligonucleotide and its replacement by a new DNA fragment. In transcription, TFIIH has an essential role in transcription initiation. When the pre-initiation complex (PIC) has been established, TFIIH is required for promoter opening and promoter escape. Phosphorylation of the C-terminal tail (CTD) of the largest subunit of RNA polymerase II by the kinase module CAK controls the initiation of transcription. The N-terminus of GTF2H2 interacts with and regulates XPD whereas an intact C-terminus is required for a successful escape of RNAP II form the promoter. This chain is General transcription factor IIH subunit 2 (Gtf2h2), found in Rattus norvegicus (Rat).